A 113-amino-acid chain; its full sequence is Hydrogenase maturation factor HybF (113 aa).

Residues histidine 2 and glutamate 3 each contribute to the Ni(2+) site. Zn(2+) contacts are provided by cysteine 73, cysteine 76, cysteine 89, and cysteine 92.

It belongs to the HypA/HybF family. HybF subfamily.

Its function is as follows. Involved in the maturation of [NiFe] hydrogenases. Required for nickel insertion into the metal center of the hydrogenase. The chain is Hydrogenase maturation factor HybF from Klebsiella pneumoniae.